The primary structure comprises 448 residues: Protein giant (448 aa).

Disordered regions lie at residues 23 to 47, 83 to 134, 238 to 259, and 298 to 363; these read MHHH…LPVQ, QQHQ…ASPT, VEAT…RPFK, and IRSS…TSSS. A compositionally biased stretch (low complexity) spans 30 to 47; the sequence is HHQQQPLHHLPHSQLPVQ. Residues 100 to 112 are compositionally biased toward basic and acidic residues; sequence DLSRRCDSVETPR. Positions 115–134 are enriched in low complexity; sequence PSPYQTSYSYGSGSPSASPT. A compositionally biased stretch (polar residues) spans 298–310; that stretch reads IRSSNGGSRTVTN. Positions 318–333 are enriched in low complexity; that stretch reads SRSGSVNEGSSSNNNS. Positions 384–447 constitute a bZIP domain; it reads DAAYYERRRK…AAFTSAKVTT (64 aa). A basic motif region spans residues 390 to 406; the sequence is RRRKNNAAAKKSRDRRR. Residues 407–414 are leucine-zipper; it reads IKEDEIAI.

It belongs to the bZIP family. In terms of assembly, homodimer or heterodimer. Phosphorylated at multiple sites.

It is found in the nucleus. Represses the expression of both the krueppel and knirps segmentation gap genes. Binds, in vitro, to the krueppel regulatory elements CD1 and CD2. It is required in the early embryo for the development of portions of the head and abdomen. This is Protein giant (gt) from Drosophila melanogaster (Fruit fly).